Consider the following 176-residue polypeptide: ATP-dependent protease subunit HslV (176 aa).

T5 is a catalytic residue. Na(+) is bound by residues A161, C164, and T167.

Belongs to the peptidase T1B family. HslV subfamily. In terms of assembly, a double ring-shaped homohexamer of HslV is capped on each side by a ring-shaped HslU homohexamer. The assembly of the HslU/HslV complex is dependent on binding of ATP.

It is found in the cytoplasm. The enzyme catalyses ATP-dependent cleavage of peptide bonds with broad specificity.. With respect to regulation, allosterically activated by HslU binding. In terms of biological role, protease subunit of a proteasome-like degradation complex believed to be a general protein degrading machinery. The sequence is that of ATP-dependent protease subunit HslV from Pelotomaculum thermopropionicum (strain DSM 13744 / JCM 10971 / SI).